Reading from the N-terminus, the 519-residue chain is Dihydropyrimidinase (519 aa).

Positions 67 and 69 each coordinate Zn(2+). Residue serine 79 is modified to Phosphoserine. Zn(2+) is bound at residue lysine 159. The residue at position 159 (lysine 159) is an N6-carboxylysine. Substrate is bound at residue tyrosine 164. The Zn(2+) site is built by histidine 192 and histidine 248. Lysine 256 is modified (N6-succinyllysine). Aspartate 326 provides a ligand contact to Zn(2+). Residue asparagine 347 coordinates substrate. Threonine 510 bears the Phosphothreonine mark.

This sequence belongs to the metallo-dependent hydrolases superfamily. Hydantoinase/dihydropyrimidinase family. Homotetramer. It depends on Zn(2+) as a cofactor. Post-translationally, carboxylation allows a single lysine to coordinate two zinc ions.

It catalyses the reaction 5,6-dihydrouracil + H2O = 3-(carbamoylamino)propanoate + H(+). Functionally, catalyzes the second step of the reductive pyrimidine degradation, the reversible hydrolytic ring opening of dihydropyrimidines. Can catalyze the ring opening of 5,6-dihydrouracil to N-carbamyl-alanine and of 5,6-dihydrothymine to N-carbamyl-amino isobutyrate. The protein is Dihydropyrimidinase (Dpys) of Rattus norvegicus (Rat).